The following is a 324-amino-acid chain: Beta-ketoacyl-[acyl-carrier-protein] synthase III (324 aa).

Residues cysteine 112 and histidine 251 contribute to the active site. An ACP-binding region spans residues 252–256 (QANLR). Residue asparagine 281 is part of the active site.

This sequence belongs to the thiolase-like superfamily. FabH family. Homodimer.

It is found in the cytoplasm. The catalysed reaction is malonyl-[ACP] + acetyl-CoA + H(+) = 3-oxobutanoyl-[ACP] + CO2 + CoA. It participates in lipid metabolism; fatty acid biosynthesis. In terms of biological role, catalyzes the condensation reaction of fatty acid synthesis by the addition to an acyl acceptor of two carbons from malonyl-ACP. Catalyzes the first condensation reaction which initiates fatty acid synthesis and may therefore play a role in governing the total rate of fatty acid production. Possesses both acetoacetyl-ACP synthase and acetyl transacylase activities. Its substrate specificity determines the biosynthesis of branched-chain and/or straight-chain of fatty acids. The polypeptide is Beta-ketoacyl-[acyl-carrier-protein] synthase III (Clostridium perfringens (strain 13 / Type A)).